A 272-amino-acid chain; its full sequence is 2-dehydro-3-deoxyphosphooctonate aldolase (272 aa).

Belongs to the KdsA family.

The protein resides in the cytoplasm. It catalyses the reaction D-arabinose 5-phosphate + phosphoenolpyruvate + H2O = 3-deoxy-alpha-D-manno-2-octulosonate-8-phosphate + phosphate. It functions in the pathway carbohydrate biosynthesis; 3-deoxy-D-manno-octulosonate biosynthesis; 3-deoxy-D-manno-octulosonate from D-ribulose 5-phosphate: step 2/3. The protein operates within bacterial outer membrane biogenesis; lipopolysaccharide biosynthesis. This Geobacter metallireducens (strain ATCC 53774 / DSM 7210 / GS-15) protein is 2-dehydro-3-deoxyphosphooctonate aldolase.